Here is a 246-residue protein sequence, read N- to C-terminus: Small ribosomal subunit protein uS2c (246 aa).

This sequence belongs to the universal ribosomal protein uS2 family.

The protein resides in the plastid. Its subcellular location is the chloroplast. The sequence is that of Small ribosomal subunit protein uS2c (rps2) from Pelargonium hortorum (Common geranium).